The primary structure comprises 616 residues: Adenylosuccinate synthetase 1 (616 aa).

The segment at 1–27 is disordered; the sequence is MDKQAERGQSAGPVKTPQGTQPPAHNY. The segment covering 17-27 has biased composition (polar residues); the sequence is PQGTQPPAHNY. Residues 87-93 and 117-119 contribute to the GTP site; these read GDEGKGK and GHT. Aspartate 88 (proton acceptor) is an active-site residue. Mg(2+)-binding residues include aspartate 88 and glycine 117. IMP contacts are provided by residues 88–91, 115–118, threonine 202, lysine 216, glutamine 328, threonine 343, and lysine 472; these read DEGK and NAGH. Residue histidine 118 is the Proton donor of the active site. Substrate is bound at residue 468–474; sequence AVTKKPR. Residues arginine 474 and 603–605 contribute to the GTP site; that span reads GNG.

The protein belongs to the adenylosuccinate synthetase family. As to quaternary structure, homodimer. Mg(2+) serves as cofactor.

The protein resides in the cytoplasm. It catalyses the reaction IMP + L-aspartate + GTP = N(6)-(1,2-dicarboxyethyl)-AMP + GDP + phosphate + 2 H(+). It participates in purine metabolism; AMP biosynthesis via de novo pathway; AMP from IMP: step 1/2. Its function is as follows. Plays an important role in the salvage pathway for purine nucleotide biosynthesis. Catalyzes the first committed step in the biosynthesis of AMP from IMP. The sequence is that of Adenylosuccinate synthetase 1 from Trypanosoma cruzi (strain CL Brener).